Consider the following 698-residue polypeptide: Elongation factor G (698 aa).

One can recognise a tr-type G domain in the interval 10–285 (DKTRNIGIMA…GVVDYLPSPL (276 aa)). GTP contacts are provided by residues 19–26 (AHIDAGKT), 83–87 (DTPGH), and 137–140 (NKMD).

It belongs to the TRAFAC class translation factor GTPase superfamily. Classic translation factor GTPase family. EF-G/EF-2 subfamily.

It is found in the cytoplasm. Functionally, catalyzes the GTP-dependent ribosomal translocation step during translation elongation. During this step, the ribosome changes from the pre-translocational (PRE) to the post-translocational (POST) state as the newly formed A-site-bound peptidyl-tRNA and P-site-bound deacylated tRNA move to the P and E sites, respectively. Catalyzes the coordinated movement of the two tRNA molecules, the mRNA and conformational changes in the ribosome. The chain is Elongation factor G from Lactobacillus johnsonii (strain CNCM I-12250 / La1 / NCC 533).